The chain runs to 78 residues: Small ribosomal subunit protein bS18 (78 aa).

Belongs to the bacterial ribosomal protein bS18 family. Part of the 30S ribosomal subunit. Forms a tight heterodimer with protein bS6.

In terms of biological role, binds as a heterodimer with protein bS6 to the central domain of the 16S rRNA, where it helps stabilize the platform of the 30S subunit. The chain is Small ribosomal subunit protein bS18 from Lactobacillus acidophilus (strain ATCC 700396 / NCK56 / N2 / NCFM).